The chain runs to 1195 residues: Protein PIP82 (1195 aa).

The segment covering 1–10 (MSHQEQQFQH) has biased composition (low complexity). Disordered stretches follow at residues 1–55 (MSHQ…IGSS), 85–132 (KLRG…SQQF), 291–471 (NTFD…TANL), 493–515 (KVAKEPEELETKAEGSATGGASG), 544–567 (QRNANNQNATTSKQPKPNTVGHEP), 613–637 (EEDNEEDHSQDQTKRGQSSVSGIAT), 702–771 (MSPV…IVPK), 833–977 (SAGS…VKTS), and 1060–1195 (QITV…VVEI). A compositionally biased stretch (basic residues) spans 11 to 26 (YPHHQHHHHHHHHHIH). Residues 37–50 (RSSDLEPNRSRNTD) show a composition bias toward basic and acidic residues. Over residues 109 to 118 (GSAKDGAGAA) the composition is skewed to low complexity. A compositionally biased stretch (polar residues) spans 119-132 (QQTHLQVAGQSQQF). Basic and acidic residues predominate over residues 300 to 313 (HEQFERGKISHETD). The span at 351–360 (QQAAAEESPQ) shows a compositional bias: low complexity. Positions 361–371 (ANPPPPPPPRP) are enriched in pro residues. Positions 400–450 (ETTKTAENADENNASRKLSIRQNIKRLRKSIKRPSKIKSKAAAPVPDSDEE) are phospho-regulated basic and hydrophobic (PRBH) motif. Basic residues predominate over residues 422–438 (NIKRLRKSIKRPSKIKS). The segment covering 494 to 505 (VAKEPEELETKA) has biased composition (basic and acidic residues). The span at 545–560 (RNANNQNATTSKQPKP) shows a compositional bias: polar residues. Polar residues-rich tracts occupy residues 732–742 (SGPQKSMSYSP) and 856–867 (RVQSPQIGNSRE). Positions 872–891 (QEEEDKEAERDSEEEEEERD) are enriched in acidic residues. Composition is skewed to pro residues over residues 898-910 (SESPPPPPLPQRR) and 925-939 (VPPPLPVSKPPPPPS). A compositionally biased stretch (low complexity) spans 940–968 (VETIPSVASLPSPAPVTRSMAQRSASMSR). Residues 1075–1085 (QSDQSDQSAHQ) are compositionally biased toward polar residues. Residues 1086 to 1095 (EITDTRKTKS) are compositionally biased toward basic and acidic residues. The segment covering 1102–1111 (RQNSNCSRSE) has biased composition (polar residues). Composition is skewed to low complexity over residues 1114-1149 (SPLSFPSSRRSSTPTNLNANSNSNPNPSTNPNQNPS) and 1179-1195 (SYYSISPSGSSRYVVEI).

Post-translationally, phosphorylated by aPKC which lowers lipid affinity and promotes dissociation from the cell cortex. In the photoreceptor cells, aPKC-mediated phosphorylation leads to its displacement from the stalk apical cortex and thus restricts its localization to the rhabdomeric apical cortex where it functions. Dephosphorylation appears to be light-dependent. Restricted to photoreceptor cells (at protein level). Not detected until approximately 48hrs after puparium formation (APF) and then maintained in the photoreceptor cells post-eclosion (at protein level).

It is found in the cytoplasm. The protein resides in the cell cortex. It localises to the cytosol. The protein localises to the cell projection. Its subcellular location is the rhabdomere. In terms of biological role, required for the morphological differentiation and maintenance of the rhabdomeric photoreceptor apical domain. Acts as a downstream component of the gl and Pph13 transcriptional pathway which is required for photoreceptor cell development. Likely to function by regulating the trafficking or retention of rhabdomeric proteins including the phototransduction proteins ninaE and didum. The protein is Protein PIP82 of Drosophila melanogaster (Fruit fly).